A 120-amino-acid polypeptide reads, in one-letter code: Large ribosomal subunit protein bL12 (120 aa).

Belongs to the bacterial ribosomal protein bL12 family. As to quaternary structure, homodimer. Part of the ribosomal stalk of the 50S ribosomal subunit. Forms a multimeric L10(L12)X complex, where L10 forms an elongated spine to which 2 to 4 L12 dimers bind in a sequential fashion. Binds GTP-bound translation factors.

Functionally, forms part of the ribosomal stalk which helps the ribosome interact with GTP-bound translation factors. Is thus essential for accurate translation. This is Large ribosomal subunit protein bL12 from Clostridium botulinum (strain Alaska E43 / Type E3).